The chain runs to 156 residues: ATP synthase subunit b (156 aa).

A helical transmembrane segment spans residues 11–31 (LIAFVVFVIFCMKYVWPPIIG).

Belongs to the ATPase B chain family. F-type ATPases have 2 components, F(1) - the catalytic core - and F(0) - the membrane proton channel. F(1) has five subunits: alpha(3), beta(3), gamma(1), delta(1), epsilon(1). F(0) has three main subunits: a(1), b(2) and c(10-14). The alpha and beta chains form an alternating ring which encloses part of the gamma chain. F(1) is attached to F(0) by a central stalk formed by the gamma and epsilon chains, while a peripheral stalk is formed by the delta and b chains.

It localises to the cell inner membrane. Its function is as follows. F(1)F(0) ATP synthase produces ATP from ADP in the presence of a proton or sodium gradient. F-type ATPases consist of two structural domains, F(1) containing the extramembraneous catalytic core and F(0) containing the membrane proton channel, linked together by a central stalk and a peripheral stalk. During catalysis, ATP synthesis in the catalytic domain of F(1) is coupled via a rotary mechanism of the central stalk subunits to proton translocation. Component of the F(0) channel, it forms part of the peripheral stalk, linking F(1) to F(0). The polypeptide is ATP synthase subunit b (Colwellia psychrerythraea (strain 34H / ATCC BAA-681) (Vibrio psychroerythus)).